The following is a 286-amino-acid chain: MVAKILDGKQIAKEYRQRLKNQVNDLKEYGFTPKLSVILVGNDGASQSYVKSKKKAAEKIGMISEIIHLDESTSEEVVLSELNRLNNDDTVSGILVQVPLPKQVSEQKVLEAINPEKDVDGFHPINIGKLYIDEQTFVPCTPLGIMEILKHADINLEGKNAVVIGRSHIVGQPVSKLLLQANATVTILHSRTKNMNAHLKQADVIVSAVGQPGLVTKENVKKGAVIIDVGNTPDENGKLKGDVAYDEIKEIASAITPVPGGVGPLTITMVLNNTLLAEKLRRGLTK.

Residues 165-167 (GRS) and Ser190 each bind NADP(+).

Belongs to the tetrahydrofolate dehydrogenase/cyclohydrolase family. As to quaternary structure, homodimer.

The catalysed reaction is (6R)-5,10-methylene-5,6,7,8-tetrahydrofolate + NADP(+) = (6R)-5,10-methenyltetrahydrofolate + NADPH. It carries out the reaction (6R)-5,10-methenyltetrahydrofolate + H2O = (6R)-10-formyltetrahydrofolate + H(+). It participates in one-carbon metabolism; tetrahydrofolate interconversion. Catalyzes the oxidation of 5,10-methylenetetrahydrofolate to 5,10-methenyltetrahydrofolate and then the hydrolysis of 5,10-methenyltetrahydrofolate to 10-formyltetrahydrofolate. The sequence is that of Bifunctional protein FolD from Staphylococcus epidermidis (strain ATCC 35984 / DSM 28319 / BCRC 17069 / CCUG 31568 / BM 3577 / RP62A).